A 94-amino-acid polypeptide reads, in one-letter code: Large ribosomal subunit protein bL27 (94 aa).

A propeptide spanning residues Met-1 to Phe-9 is cleaved from the precursor. Residues Lys-12–Ala-33 form a disordered region.

The protein belongs to the bacterial ribosomal protein bL27 family. Post-translationally, the N-terminus is cleaved by ribosomal processing cysteine protease Prp.

The sequence is that of Large ribosomal subunit protein bL27 from Lactococcus lactis subsp. lactis (strain IL1403) (Streptococcus lactis).